A 611-amino-acid chain; its full sequence is Autophagy-related protein 22-2 (611 aa).

Residues 1–24 (MRADDNPSARSLHAQFPGDDTRPT) form a disordered region. The helical transmembrane segment at 35-55 (YGWAAEVFTVCAMGSFLPITL) threads the bilayer. A glycan (N-linked (GlcNAc...) asparagine) is linked at N78. Helical transmembrane passes span 116 to 136 (TASF…VLII), 151 to 171 (LLVA…SVVP), and 175 to 195 (IVGA…FVLL). An N-linked (GlcNAc...) asparagine glycan is attached at N221. The next 2 helical transmembrane spans lie at 286 to 306 (IGIG…VIIA) and 316 to 336 (LVLF…ALWL). An N-linked (GlcNAc...) asparagine glycan is attached at N353. Helical transmembrane passes span 380-400 (ILLF…VSGT), 414-434 (AALG…AFSW), 449-469 (IIAC…GFVP), 483-503 (WEMF…SSYC), 521-541 (ALYA…VGLI), and 551-571 (AFVF…LVDV).

Belongs to the ATG22 family.

The protein resides in the vacuole membrane. In terms of biological role, vacuolar effluxer which mediate the efflux of amino acids resulting from autophagic degradation. The release of autophagic amino acids allows the maintenance of protein synthesis and viability during nitrogen starvation. This is Autophagy-related protein 22-2 (atg22-2) from Aspergillus clavatus (strain ATCC 1007 / CBS 513.65 / DSM 816 / NCTC 3887 / NRRL 1 / QM 1276 / 107).